We begin with the raw amino-acid sequence, 449 residues long: Glutathione reductase (449 aa).

Ser15, Gly16, Glu35, Thr42, Cys43, and Lys51 together coordinate FAD. Ser15 provides a ligand contact to glutathione. Residues Cys43 and Cys48 are joined by a disulfide bond. Position 99 (Tyr99) interacts with glutathione. FAD is bound at residue Ala115. 6 residues coordinate NADP(+): Gly175, Ile178, Glu181, Arg198, Arg204, and Gly261. 2 residues coordinate FAD: Asp302 and Thr310. Ala340 lines the NADP(+) pocket. Residue His435 coordinates FAD. His435 acts as the Proton acceptor in catalysis.

Belongs to the class-I pyridine nucleotide-disulfide oxidoreductase family. Homodimer. Requires FAD as cofactor.

The protein resides in the cytoplasm. The catalysed reaction is 2 glutathione + NADP(+) = glutathione disulfide + NADPH + H(+). It functions in the pathway xenobiotic degradation; (2,4,5-trichlorophenoxy)acetate degradation. Its function is as follows. Catalyzes the reduction of glutathione disulfide (GSSG) to reduced glutathione (GSH). Constitutes the major mechanism to maintain a high GSH:GSSG ratio in the cytosol. The protein is Glutathione reductase (gor) of Burkholderia cepacia (Pseudomonas cepacia).